A 130-amino-acid polypeptide reads, in one-letter code: Phosphoribosyl-AMP cyclohydrolase (130 aa).

D77 serves as a coordination point for Mg(2+). C78 contributes to the Zn(2+) binding site. Residues D79 and D81 each coordinate Mg(2+). Residues C95 and C102 each coordinate Zn(2+).

This sequence belongs to the PRA-CH family. In terms of assembly, homodimer. Requires Mg(2+) as cofactor. The cofactor is Zn(2+).

Its subcellular location is the cytoplasm. The catalysed reaction is 1-(5-phospho-beta-D-ribosyl)-5'-AMP + H2O = 1-(5-phospho-beta-D-ribosyl)-5-[(5-phospho-beta-D-ribosylamino)methylideneamino]imidazole-4-carboxamide. It functions in the pathway amino-acid biosynthesis; L-histidine biosynthesis; L-histidine from 5-phospho-alpha-D-ribose 1-diphosphate: step 3/9. Its function is as follows. Catalyzes the hydrolysis of the adenine ring of phosphoribosyl-AMP. The protein is Phosphoribosyl-AMP cyclohydrolase of Pseudomonas putida (strain W619).